Here is a 159-residue protein sequence, read N- to C-terminus: MTIVTEALTELEPVIKTTFTVEEIRQLLPHRYPFALVDRIIDYVPGQKAVGLKNVTINEPFFPGHIPNRPLMPGVLIVESMAQVGGVILTQLPGMKGKFFAFAGIDKTRFRRPVVPGDQLIMTVELLSFKMNKIAKMQGEARVDGQLAAQGEMMFSIFD.

Histidine 65 is a catalytic residue.

The protein belongs to the thioester dehydratase family. FabZ subfamily.

The protein localises to the cytoplasm. The catalysed reaction is a (3R)-hydroxyacyl-[ACP] = a (2E)-enoyl-[ACP] + H2O. Involved in unsaturated fatty acids biosynthesis. Catalyzes the dehydration of short chain beta-hydroxyacyl-ACPs and long chain saturated and unsaturated beta-hydroxyacyl-ACPs. The protein is 3-hydroxyacyl-[acyl-carrier-protein] dehydratase FabZ of Microcystis aeruginosa (strain NIES-843 / IAM M-2473).